The following is a 453-amino-acid chain: Adenylyltransferase and sulfurtransferase MOCS3 (453 aa).

Phosphothreonine is present on Thr-62. Residues Gly-101, Asp-122, 129-133 (SNFHR), Lys-146, and 190-191 (DN) each bind ATP. Zn(2+)-binding residues include Cys-231 and Cys-234. The active-site Glycyl thioester intermediate; for adenylyltransferase activity is the Cys-248. Zn(2+)-binding residues include Cys-306 and Cys-309. In terms of domain architecture, Rhodanese spans 355-451 (QAQPHLLIDV…WTNSVDPSFP (97 aa)). Cys-410 serves as the catalytic Cysteine persulfide intermediate; for sulfurtransferase activity.

It in the N-terminal section; belongs to the HesA/MoeB/ThiF family. UBA4 subfamily. Zn(2+) serves as cofactor.

The protein localises to the cytoplasm. It is found in the cytosol. The catalysed reaction is [molybdopterin-synthase sulfur-carrier protein]-C-terminal Gly-Gly + ATP + H(+) = [molybdopterin-synthase sulfur-carrier protein]-C-terminal Gly-Gly-AMP + diphosphate. It catalyses the reaction [molybdopterin-synthase sulfur-carrier protein]-C-terminal Gly-Gly-AMP + S-sulfanyl-L-cysteinyl-[cysteine desulfurase] + AH2 = [molybdopterin-synthase sulfur-carrier protein]-C-terminal-Gly-aminoethanethioate + L-cysteinyl-[cysteine desulfurase] + A + AMP + 2 H(+). The protein operates within tRNA modification; 5-methoxycarbonylmethyl-2-thiouridine-tRNA biosynthesis. It participates in cofactor biosynthesis; molybdopterin biosynthesis. In terms of biological role, plays a central role in 2-thiolation of mcm(5)S(2)U at tRNA wobble positions of cytosolic tRNA(Lys), tRNA(Glu) and tRNA(Gln). Also essential during biosynthesis of the molybdenum cofactor. Acts by mediating the C-terminal thiocarboxylation of sulfur carriers URM1 and MOCS2A. Its N-terminus first activates URM1 and MOCS2A as acyl-adenylates (-COAMP), then the persulfide sulfur on the catalytic cysteine is transferred to URM1 and MOCS2A to form thiocarboxylation (-COSH) of their C-terminus. The reaction probably involves hydrogen sulfide that is generated from the persulfide intermediate and that acts as a nucleophile towards URM1 and MOCS2A. Subsequently, a transient disulfide bond is formed. Does not use thiosulfate as sulfur donor; NFS1 probably acting as a sulfur donor for thiocarboxylation reactions. The protein is Adenylyltransferase and sulfurtransferase MOCS3 of Drosophila yakuba (Fruit fly).